A 503-amino-acid polypeptide reads, in one-letter code: UDP-N-acetylmuramate--L-alanine ligase (503 aa).

The tract at residues 1 to 22 is disordered; the sequence is MIKQTHVSNSSNNSTNSTAAQV. Over residues 8 to 18 the composition is skewed to low complexity; the sequence is SNSSNNSTNST. An ATP-binding site is contributed by 135 to 141; the sequence is GTHGKTT.

The protein belongs to the MurCDEF family.

The protein resides in the cytoplasm. The enzyme catalyses UDP-N-acetyl-alpha-D-muramate + L-alanine + ATP = UDP-N-acetyl-alpha-D-muramoyl-L-alanine + ADP + phosphate + H(+). Its pathway is cell wall biogenesis; peptidoglycan biosynthesis. Functionally, cell wall formation. The protein is UDP-N-acetylmuramate--L-alanine ligase of Colwellia psychrerythraea (strain 34H / ATCC BAA-681) (Vibrio psychroerythus).